The chain runs to 259 residues: uncharacterized protein (259 aa).

The next 3 helical transmembrane spans lie at 55-75 (ILIL…SYLI), 85-105 (FPSI…FFSS), and 127-147 (FFFA…LCCG).

It is found in the membrane. This is an uncharacterized protein from Arabidopsis thaliana (Mouse-ear cress).